The following is a 437-amino-acid chain: Bystin (437 aa).

The disordered stretch occupies residues 1–105; that stretch reads MPKFKAARGV…DGSDDEDEEW (105 aa). Residue R40 is modified to Omega-N-methylarginine. Residue S55 is modified to Phosphoserine. The segment covering 71 to 87 has biased composition (basic and acidic residues); that stretch reads AEHGTGDKPAAPRERTT. A Phosphoserine modification is found at S98. T156 carries the phosphothreonine modification. Phosphoserine is present on residues S167 and S414.

It belongs to the bystin family. Binds trophinin, tastin and cytokeratins. Found in the placenta from the sixth week of pregnancy. Was localized in the cytoplasm of the syncytiotrophoblast in the chorionic villi and in endometrial decidual cells at the uteroplacental interface. After week 10, the level decreased and then disappeared from placental villi.

It is found in the cytoplasm. Its subcellular location is the nucleus. The protein localises to the nucleolus. Its function is as follows. Required for processing of 20S pre-rRNA precursor and biogenesis of 40S ribosomal subunits. May be required for trophinin-dependent regulation of cell adhesion during implantation of human embryos. This is Bystin from Homo sapiens (Human).